Here is a 184-residue protein sequence, read N- to C-terminus: Fe/S biogenesis protein NfuA (184 aa).

Positions 142 and 145 each coordinate [4Fe-4S] cluster.

The protein belongs to the NfuA family. As to quaternary structure, homodimer. The cofactor is [4Fe-4S] cluster.

In terms of biological role, involved in iron-sulfur cluster biogenesis. Binds a 4Fe-4S cluster, can transfer this cluster to apoproteins, and thereby intervenes in the maturation of Fe/S proteins. Could also act as a scaffold/chaperone for damaged Fe/S proteins. This Wigglesworthia glossinidia brevipalpis protein is Fe/S biogenesis protein NfuA.